The following is a 79-amino-acid chain: Acyl carrier protein (79 aa).

The Carrier domain occupies 4–79; the sequence is AEIKDKVYDI…QAIDYIVNKK (76 aa). Residue Ser39 is modified to O-(pantetheine 4'-phosphoryl)serine.

It belongs to the acyl carrier protein (ACP) family. Post-translationally, 4'-phosphopantetheine is transferred from CoA to a specific serine of apo-ACP by AcpS. This modification is essential for activity because fatty acids are bound in thioester linkage to the sulfhydryl of the prosthetic group.

The protein localises to the cytoplasm. It functions in the pathway lipid metabolism; fatty acid biosynthesis. Functionally, carrier of the growing fatty acid chain in fatty acid biosynthesis. The protein is Acyl carrier protein of Pelodictyon phaeoclathratiforme (strain DSM 5477 / BU-1).